The sequence spans 197 residues: Gene 49 protein (197 aa).

Disordered stretches follow at residues 1-49 (MRGN…EVRP) and 114-157 (FANL…RFCK). A compositionally biased stretch (gly residues) spans 117 to 135 (LGGGSKPNSGGGGSGGGGQ). Low complexity predominate over residues 136–146 (QHQSRAPQQAQ).

The protein is Gene 49 protein (49) of Mycobacterium phage D29 (Mycobacteriophage D29).